A 185-amino-acid polypeptide reads, in one-letter code: piRNA-mediated silencing protein C19orf84 homolog (185 aa).

Disordered regions lie at residues 1–38 and 93–185; these read MDEL…PSLL and HIWP…EADY. A compositionally biased stretch (polar residues) spans 11–25; the sequence is NGDNLSLPSAGTESW. Residues 26–38 show a composition bias toward low complexity; that stretch reads PTSATPGLPPSLL. A compositionally biased stretch (basic residues) spans 118–130; sequence RPSRGWGRGRGRG. The segment covering 139-150 has biased composition (basic and acidic residues); that stretch reads GPERAEERERNM.

As to quaternary structure, interacts with SPOCD1.

The protein localises to the nucleus. Its subcellular location is the nucleoplasm. In terms of biological role, protein adapter involved in piRNA-directed transposon methylation by connecting PIWIL4-piRNA and DNA methylation machineries. The PIWIL4-piRNA pathway plays a central role during spermatogenesis by directing transposon DNA methylation and silencing, thereby preventing their mobilization, which is essential for the germline integrity. This is piRNA-mediated silencing protein C19orf84 homolog from Mus musculus (Mouse).